The chain runs to 318 residues: NADH-ubiquinone oxidoreductase chain 1 (318 aa).

8 helical membrane passes run 2-22 (FTIN…FLTL), 70-90 (LYMA…TPLP), 98-118 (FNLG…SILW), 140-160 (ISYG…SGSF), 173-193 (WLLL…LAET), 217-237 (AGSF…MNAL), 253-273 (ELYT…FLWI), and 294-314 (LPLT…LSGI).

Belongs to the complex I subunit 1 family.

The protein resides in the mitochondrion inner membrane. It catalyses the reaction a ubiquinone + NADH + 5 H(+)(in) = a ubiquinol + NAD(+) + 4 H(+)(out). In terms of biological role, core subunit of the mitochondrial membrane respiratory chain NADH dehydrogenase (Complex I) that is believed to belong to the minimal assembly required for catalysis. Complex I functions in the transfer of electrons from NADH to the respiratory chain. The immediate electron acceptor for the enzyme is believed to be ubiquinone. This Sapajus apella (Brown-capped capuchin) protein is NADH-ubiquinone oxidoreductase chain 1 (MT-ND1).